We begin with the raw amino-acid sequence, 786 residues long: LPS-assembly protein LptD (786 aa).

The first 24 residues, 1-24 (MKKRIPTLLATMIASALYSHQGLA), serve as a signal peptide directing secretion. 2 disulfide bridges follow: Cys31/Cys726 and Cys173/Cys727.

The protein belongs to the LptD family. Component of the lipopolysaccharide transport and assembly complex. Interacts with LptE and LptA. Contains two intramolecular disulfide bonds.

Its subcellular location is the cell outer membrane. In terms of biological role, together with LptE, is involved in the assembly of lipopolysaccharide (LPS) at the surface of the outer membrane. This is LPS-assembly protein LptD from Salmonella choleraesuis (strain SC-B67).